A 522-amino-acid polypeptide reads, in one-letter code: Glutamate--cysteine ligase (522 aa).

It belongs to the glutamate--cysteine ligase type 1 family. Type 1 subfamily.

It catalyses the reaction L-cysteine + L-glutamate + ATP = gamma-L-glutamyl-L-cysteine + ADP + phosphate + H(+). Its pathway is sulfur metabolism; glutathione biosynthesis; glutathione from L-cysteine and L-glutamate: step 1/2. This Vibrio campbellii (strain ATCC BAA-1116) protein is Glutamate--cysteine ligase.